Consider the following 65-residue polypeptide: Large ribosomal subunit protein bL35 (65 aa).

Residues 1-26 form a disordered region; that stretch reads MPKIKTVRGAAKRFKKTASGGFKRKQ. The segment covering 10 to 26 has biased composition (basic residues); the sequence is AAKRFKKTASGGFKRKQ.

The protein belongs to the bacterial ribosomal protein bL35 family.

This Actinobacillus succinogenes (strain ATCC 55618 / DSM 22257 / CCUG 43843 / 130Z) protein is Large ribosomal subunit protein bL35.